Reading from the N-terminus, the 445-residue chain is Phosphoglucosamine mutase (445 aa).

Ser-102 serves as the catalytic Phosphoserine intermediate. Ser-102, Asp-241, Asp-243, and Asp-245 together coordinate Mg(2+). Residue Ser-102 is modified to Phosphoserine.

This sequence belongs to the phosphohexose mutase family. It depends on Mg(2+) as a cofactor. In terms of processing, activated by phosphorylation.

It carries out the reaction alpha-D-glucosamine 1-phosphate = D-glucosamine 6-phosphate. Catalyzes the conversion of glucosamine-6-phosphate to glucosamine-1-phosphate. This Haemophilus influenzae (strain 86-028NP) protein is Phosphoglucosamine mutase.